Reading from the N-terminus, the 312-residue chain is TATA box-binding protein-like 2 (312 aa).

Residues 65–115 (DELSTQDEPSQVEKESKNEDSGIYTDCPQKESTQADIDTSNSAQNTSQFNL) are disordered. Positions 75–84 (QVEKESKNED) are enriched in basic and acidic residues. Positions 94–115 (KESTQADIDTSNSAQNTSQFNL) are enriched in polar residues.

The protein belongs to the TBP family. In adults, expressed in the gonads, with expression much higher in the ovary than the testis (at protein level). Shows a small amount of expression in other adult organs, including the brain and kidney. Embryonic expression is mostly ubiquitous except in early gastrula embryos where expression is asymmetric.

It is found in the nucleus. In terms of biological role, TATA box-binding transcription factor. Members of the TBP family are differentially required to regulate transcription and development during early embryogenesis. Commits mesoderm to the hematopoietic lineage during hemopoiesis, acting via mespa. Binds to the mespa promoter. In Danio rerio (Zebrafish), this protein is TATA box-binding protein-like 2.